Here is a 344-residue protein sequence, read N- to C-terminus: Dihydroorotate dehydrogenase (quinone) (344 aa).

Residues 65–69 (AGLDK) and T89 each bind FMN. K69 provides a ligand contact to substrate. 114 to 118 (NRMGF) provides a ligand contact to substrate. Positions 145 and 178 each coordinate FMN. N178 is a binding site for substrate. S181 (nucleophile) is an active-site residue. N183 is a substrate binding site. The FMN site is built by K223 and T251. 252-253 (NT) serves as a coordination point for substrate. FMN is bound by residues G274, G303, and 324–325 (YT).

The protein belongs to the dihydroorotate dehydrogenase family. Type 2 subfamily. As to quaternary structure, monomer. The cofactor is FMN.

Its subcellular location is the cell membrane. It catalyses the reaction (S)-dihydroorotate + a quinone = orotate + a quinol. The protein operates within pyrimidine metabolism; UMP biosynthesis via de novo pathway; orotate from (S)-dihydroorotate (quinone route): step 1/1. Catalyzes the conversion of dihydroorotate to orotate with quinone as electron acceptor. This Ralstonia nicotianae (strain ATCC BAA-1114 / GMI1000) (Ralstonia solanacearum) protein is Dihydroorotate dehydrogenase (quinone).